The sequence spans 178 residues: DNA-directed RNA polymerase subunit beta (178 aa).

The protein belongs to the RNA polymerase beta chain family. In terms of assembly, the RNAP catalytic core consists of 2 alpha, 1 beta, 1 beta' and 1 omega subunit. When a sigma factor is associated with the core the holoenzyme is formed, which can initiate transcription.

It catalyses the reaction RNA(n) + a ribonucleoside 5'-triphosphate = RNA(n+1) + diphosphate. Functionally, DNA-dependent RNA polymerase catalyzes the transcription of DNA into RNA using the four ribonucleoside triphosphates as substrates. The polypeptide is DNA-directed RNA polymerase subunit beta (rpoB) (Liberibacter asiaticus (Citrus greening disease)).